A 483-amino-acid chain; its full sequence is UDP-N-acetylmuramoyl-L-alanyl-D-glutamate--2,6-diaminopimelate ligase (483 aa).

UDP-N-acetyl-alpha-D-muramoyl-L-alanyl-D-glutamate is bound at residue serine 30. 109-115 (GTNGKTT) is an ATP binding site. UDP-N-acetyl-alpha-D-muramoyl-L-alanyl-D-glutamate contacts are provided by residues 151-152 (TT), serine 178, and arginine 186. Lysine 218 is modified (N6-carboxylysine). Residues arginine 380, 403–406 (DNPR), glycine 453, and glutamate 457 each bind meso-2,6-diaminopimelate. The Meso-diaminopimelate recognition motif signature appears at 403 to 406 (DNPR).

This sequence belongs to the MurCDEF family. MurE subfamily. It depends on Mg(2+) as a cofactor. Post-translationally, carboxylation is probably crucial for Mg(2+) binding and, consequently, for the gamma-phosphate positioning of ATP.

The protein resides in the cytoplasm. The enzyme catalyses UDP-N-acetyl-alpha-D-muramoyl-L-alanyl-D-glutamate + meso-2,6-diaminopimelate + ATP = UDP-N-acetyl-alpha-D-muramoyl-L-alanyl-gamma-D-glutamyl-meso-2,6-diaminopimelate + ADP + phosphate + H(+). Its pathway is cell wall biogenesis; peptidoglycan biosynthesis. Its function is as follows. Catalyzes the addition of meso-diaminopimelic acid to the nucleotide precursor UDP-N-acetylmuramoyl-L-alanyl-D-glutamate (UMAG) in the biosynthesis of bacterial cell-wall peptidoglycan. The protein is UDP-N-acetylmuramoyl-L-alanyl-D-glutamate--2,6-diaminopimelate ligase of Chlamydia muridarum (strain MoPn / Nigg).